We begin with the raw amino-acid sequence, 173 residues long: Crossover junction endodeoxyribonuclease RuvC (173 aa).

Active-site residues include aspartate 8, glutamate 67, and aspartate 139. Mg(2+) is bound by residues aspartate 8, glutamate 67, and aspartate 139.

This sequence belongs to the RuvC family. In terms of assembly, homodimer which binds Holliday junction (HJ) DNA. The HJ becomes 2-fold symmetrical on binding to RuvC with unstacked arms; it has a different conformation from HJ DNA in complex with RuvA. In the full resolvosome a probable DNA-RuvA(4)-RuvB(12)-RuvC(2) complex forms which resolves the HJ. The cofactor is Mg(2+).

The protein localises to the cytoplasm. It carries out the reaction Endonucleolytic cleavage at a junction such as a reciprocal single-stranded crossover between two homologous DNA duplexes (Holliday junction).. Its function is as follows. The RuvA-RuvB-RuvC complex processes Holliday junction (HJ) DNA during genetic recombination and DNA repair. Endonuclease that resolves HJ intermediates. Cleaves cruciform DNA by making single-stranded nicks across the HJ at symmetrical positions within the homologous arms, yielding a 5'-phosphate and a 3'-hydroxyl group; requires a central core of homology in the junction. The consensus cleavage sequence is 5'-(A/T)TT(C/G)-3'. Cleavage occurs on the 3'-side of the TT dinucleotide at the point of strand exchange. HJ branch migration catalyzed by RuvA-RuvB allows RuvC to scan DNA until it finds its consensus sequence, where it cleaves and resolves the cruciform DNA. This is Crossover junction endodeoxyribonuclease RuvC from Shewanella loihica (strain ATCC BAA-1088 / PV-4).